The following is a 334-amino-acid chain: Phospholipase A1 2 (334 aa).

Residues 1 to 23 (MMNLKYLLFFCLVQALHYCYAYG) form the signal peptide. A propeptide spanning residues 24–33 (DPSLSNELDR) is cleaved from the precursor. Cysteine 37 and cysteine 120 are joined by a disulfide. Serine 170 (nucleophile) is an active-site residue. The active-site Charge relay system is the aspartate 198. 2 disulfides stabilise this stretch: cysteine 209–cysteine 214 and cysteine 252–cysteine 261. Catalysis depends on histidine 263, which acts as the Charge relay system. Cystine bridges form between cysteine 278/cysteine 302, cysteine 279/cysteine 327, and cysteine 295/cysteine 300.

It belongs to the AB hydrolase superfamily. Lipase family. Post-translationally, not glycosylated. As to expression, expressed by the venom gland.

Its subcellular location is the secreted. It carries out the reaction a 1,2-diacyl-sn-glycero-3-phosphocholine + H2O = a 2-acyl-sn-glycero-3-phosphocholine + a fatty acid + H(+). In terms of biological role, catalyzes the hydrolysis of phosphatidylcholine with phospholipase A1 activity (6.3 U/ml). May act as an allergen and induce hemolytic activity. The chain is Phospholipase A1 2 from Vespa affinis (Lesser banded hornet).